Here is a 165-residue protein sequence, read N- to C-terminus: Interferon gamma (165 aa).

Residues 1–23 form the signal peptide; that stretch reads MKYTSYILAFQLCIVLGSLGCYC. Q24 carries the post-translational modification Pyrrolidone carboxylic acid. N-linked (GlcNAc...) asparagine glycosylation is found at N48 and N120.

Belongs to the type II (or gamma) interferon family. In terms of assembly, homodimer. Interacts with IFNGR1 (via extracellular domain); this interaction promotes IFNGR1 dimerization. As to expression, released primarily from activated T lymphocytes.

The protein resides in the secreted. In terms of biological role, type II interferon produced by immune cells such as T-cells and NK cells that plays crucial roles in antimicrobial, antiviral, and antitumor responses by activating effector immune cells and enhancing antigen presentation. Primarily signals through the JAK-STAT pathway after interaction with its receptor IFNGR1 to affect gene regulation. Upon IFNG binding, IFNGR1 intracellular domain opens out to allow association of downstream signaling components JAK2, JAK1 and STAT1, leading to STAT1 activation, nuclear translocation and transcription of IFNG-regulated genes. Many of the induced genes are transcription factors such as IRF1 that are able to further drive regulation of a next wave of transcription. Plays a role in class I antigen presentation pathway by inducing a replacement of catalytic proteasome subunits with immunoproteasome subunits. In turn, increases the quantity, quality, and repertoire of peptides for class I MHC loading. Increases the efficiency of peptide generation also by inducing the expression of activator PA28 that associates with the proteasome and alters its proteolytic cleavage preference. Up-regulates as well MHC II complexes on the cell surface by promoting expression of several key molecules such as cathepsins B/CTSB, H/CTSH, and L/CTSL. Participates in the regulation of hematopoietic stem cells during development and under homeostatic conditions by affecting their development, quiescence, and differentiation. The polypeptide is Interferon gamma (IFNG) (Macaca fascicularis (Crab-eating macaque)).